The following is a 609-amino-acid chain: Neutral protease (609 aa).

The N-terminal stretch at 1–24 (MNKTQRHINWLLAVSAATALPVTA) is a signal peptide. A propeptide spanning residues 25 to 196 (AEMINVNDGS…VLQTWDGLNH (172 aa)) is cleaved from the precursor. H343 contacts Zn(2+). E344 is a catalytic residue. Zn(2+) is bound by residues H347 and E367. The active-site Proton donor is the H426.

Belongs to the peptidase M4 family. Zn(2+) is required as a cofactor.

The protein localises to the secreted. It catalyses the reaction Preferential cleavage of bonds with bulky hydrophobic groups in P2 and P1'. Phe at P1' is the most favored residue, which distinguished this enzyme from thermolysin.. Extracellular zinc metalloprotease. The protein is Neutral protease (nprV) of Vibrio proteolyticus (Aeromonas proteolytica).